The following is a 93-amino-acid chain: Neurophysin 1 (93 aa).

Disulfide bonds link Cys-10–Cys-54, Cys-13–Cys-27, Cys-21–Cys-44, Cys-28–Cys-34, Cys-61–Cys-74, Cys-68–Cys-86, and Cys-75–Cys-80.

This sequence belongs to the vasopressin/oxytocin family.

The protein localises to the secreted. Its function is as follows. Neurophysin 1 specifically binds oxytocin. This Anser anser anser (Western greylag goose) protein is Neurophysin 1.